The primary structure comprises 179 residues: MSRIGNRILKVPANTEVVIENNHITVKGKLGELHYSFSSLIKVNLENGEITTVRSNEEKTTKQLHGTTNAIIKNMLIGVSEGYKKEIEIKGVGYKATLKGNEIEVIAGYSHPVTLALPSNLKVELPKPTNIIISGIDKQAVGEFAANLRKIRKPSPYSGKGIMYKDEQIRRKEGKTASK.

This sequence belongs to the universal ribosomal protein uL6 family. As to quaternary structure, part of the 50S ribosomal subunit.

Functionally, this protein binds to the 23S rRNA, and is important in its secondary structure. It is located near the subunit interface in the base of the L7/L12 stalk, and near the tRNA binding site of the peptidyltransferase center. The sequence is that of Large ribosomal subunit protein uL6 from Metamycoplasma arthritidis (strain 158L3-1) (Mycoplasma arthritidis).